A 305-amino-acid polypeptide reads, in one-letter code: tRNA dimethylallyltransferase 1 (305 aa).

10–17 (GPTASGKT) contacts ATP. 12 to 17 (TASGKT) is a substrate binding site. An interaction with substrate tRNA region spans residues 35–38 (DSRQ).

This sequence belongs to the IPP transferase family. Monomer. The cofactor is Mg(2+).

The catalysed reaction is adenosine(37) in tRNA + dimethylallyl diphosphate = N(6)-dimethylallyladenosine(37) in tRNA + diphosphate. Its function is as follows. Catalyzes the transfer of a dimethylallyl group onto the adenine at position 37 in tRNAs that read codons beginning with uridine, leading to the formation of N6-(dimethylallyl)adenosine (i(6)A). The sequence is that of tRNA dimethylallyltransferase 1 from Syntrophus aciditrophicus (strain SB).